The chain runs to 326 residues: G-protein coupled receptor 1 (326 aa).

Residue Ser-2 is modified to N-acetylserine. The Extracellular portion of the chain corresponds to Ser-2–Asn-23. Residues Thr-24 to Phe-44 form a helical membrane-spanning segment. Residues Lys-45–Ser-51 lie on the Cytoplasmic side of the membrane. A helical transmembrane segment spans residues Phe-52 to Gly-72. Residues Asp-73–Gly-84 are Extracellular-facing. Cys-80 and Cys-151 are disulfide-bonded. A helical transmembrane segment spans residues Tyr-85–Leu-105. The Cytoplasmic portion of the chain corresponds to His-106–Glu-120. Residues Ala-121–Gly-141 form a helical membrane-spanning segment. The Extracellular segment spans residues Asn-142–Lys-160. Asn-143 is a glycosylation site (N-linked (GlcNAc...) asparagine). The helical transmembrane segment at Ala-161–Thr-181 threads the bilayer. Residues Tyr-182–Lys-213 are Cytoplasmic-facing. Residues Val-214–Ile-234 traverse the membrane as a helical segment. Topologically, residues Asn-235–Lys-246 are extracellular. The helical transmembrane segment at Ile-247 to Ile-267 threads the bilayer. Residues Ala-268–Gln-326 lie on the Cytoplasmic side of the membrane.

The protein belongs to the G-protein coupled receptor 2 family. Interacts with GPA1. In terms of tissue distribution, mostly present in the meristematic regions. Expressed at low levels in seedlings, vascular tissues of cotyledons, hypocotyl, and roots, stems, leaves, flowering buds and siliques. In dark-grown seedlings, localized in the cotyledons and the hook.

It localises to the cell membrane. Its function is as follows. Together with GPA1, may regulate the cell cycle via a signaling cascade that uses phosphatidylinositol-specific phospholipase C (PI-PLC) as an effector and inositol 1,4,5-trisphosphate(IP(3)) as a second messenger. Promotes PI-PLC activity and IP(3) accumulation. Involved in the blue light (BL) signaling. Together with GPA1 and ADT3, required for BL-mediated synthesis of phenylpyruvate and subsequently of phenylalanine (Phe), in etiolated seedlings. Probably involved in cytokinin signal transduction. Plays a positive role in gibberellin- (GA) and brassinosteroid- (BR) regulated seed germination, probably independently of a heterotrimeric G-protein. Mediates seed dormancy abolition, and promotes seed germination and flowering. The chain is G-protein coupled receptor 1 (GCR1) from Arabidopsis thaliana (Mouse-ear cress).